Here is a 164-residue protein sequence, read N- to C-terminus: 16S rRNA aminocarboxypropyltransferase (164 aa).

S-adenosyl-L-methionine is bound by residues threonine 18, isoleucine 66, leucine 87, and serine 106.

Belongs to the TDD superfamily. TSR3 family.

It localises to the cytoplasm. The catalysed reaction is an N(1)-methylpseudouridine in rRNA + S-adenosyl-L-methionine = N(1)-methyl-N(3)-[(3S)-3-amino-3-carboxypropyl]pseudouridine in rRNA + S-methyl-5'-thioadenosine + H(+). Its function is as follows. Aminocarboxypropyltransferase that catalyzes the aminocarboxypropyl transfer on pseudouridine corresponding to position 914 in M.jannaschii 16S rRNA. It constitutes the last step in biosynthesis of the hypermodified N1-methyl-N3-(3-amino-3-carboxypropyl) pseudouridine (m1acp3-Psi). The polypeptide is 16S rRNA aminocarboxypropyltransferase (Thermoplasma volcanium (strain ATCC 51530 / DSM 4299 / JCM 9571 / NBRC 15438 / GSS1)).